Consider the following 331-residue polypeptide: Phenylalanine--tRNA ligase alpha subunit (331 aa).

A Mg(2+)-binding site is contributed by E256.

This sequence belongs to the class-II aminoacyl-tRNA synthetase family. Phe-tRNA synthetase alpha subunit type 1 subfamily. In terms of assembly, tetramer of two alpha and two beta subunits. Requires Mg(2+) as cofactor.

It localises to the cytoplasm. It carries out the reaction tRNA(Phe) + L-phenylalanine + ATP = L-phenylalanyl-tRNA(Phe) + AMP + diphosphate + H(+). This is Phenylalanine--tRNA ligase alpha subunit from Colwellia psychrerythraea (strain 34H / ATCC BAA-681) (Vibrio psychroerythus).